The sequence spans 1027 residues: Sodium/potassium-transporting ATPase subunit alpha-1 (1027 aa).

Residues 1–5 (MGVGD) constitute a propeptide that is removed on maturation. Over residues 1–10 (MGVGDGRDQY) the composition is skewed to basic and acidic residues. The disordered stretch occupies residues 1 to 39 (MGVGDGRDQYELAAMSEQSGKKKSKNKKEKKEKDMDELK). Over 6-90 (GRDQYELAAM…NALTPPPTTP (85 aa)) the chain is Cytoplasmic. Residue serine 16 is modified to Phosphoserine; by PKC. Residues 29-39 (EKKEKDMDELK) show a composition bias toward basic and acidic residues. Residues 85 to 87 (PPP) form an interaction with phosphoinositide-3 kinase region. Residues 91-111 (EWVKFCKQMFGGFSMLLWTGA) traverse the membrane as a helical segment. The Extracellular segment spans residues 112-134 (VLCFLAYGILAAMEDEPANDNLY). The chain crosses the membrane as a helical span at residues 135-155 (LGVVLSAVVIITGCFSYYQDA). The Cytoplasmic segment spans residues 156 to 291 (KSSKIMDSFK…VGRTPISIEI (136 aa)). A disordered region spans residues 217–238 (DNSSLTGESEPQTRSPDFSNDN). A helical membrane pass occupies residues 292–311 (EHFIHIITGVAVFLGVSFLL). The Extracellular segment spans residues 312–323 (LSLVLGYSWLEA). The helical transmembrane segment at 324–341 (VIFLIGIIVANVPEGLLA) threads the bilayer. Over 342 to 776 (TVTVCLTLTA…EEGRLIFDNL (435 aa)) the chain is Cytoplasmic. Residue aspartate 379 is the 4-aspartylphosphate intermediate of the active site. Lysine 490 lines the ATP pocket. The Mg(2+) site is built by aspartate 721 and aspartate 725. The helical transmembrane segment at 777–796 (KKSIAYTLTSNIPEITPFLF) threads the bilayer. Residues 797-806 (FIIANIPLPL) lie on the Extracellular side of the membrane. Residues 807 to 827 (GTVTILCIDLGTDMLPAISLA) form a helical membrane-spanning segment. The Cytoplasmic portion of the chain corresponds to 828-847 (YEAAESDIMKRQPRNPKTDK). A helical membrane pass occupies residues 848 to 870 (LVNERLISIAYGQIGMIQALAGF). Residues 871 to 922 (FTYFVILAENGFLPPRLLGIRMNWDDKYINDLEDSYGQQWTYEQRKIVEFTC) are Extracellular-facing. Residues 923 to 942 (HTAFFTSIVIVQWADLIICK) traverse the membrane as a helical segment. Residues 943–955 (TRRNSVFQQGMKN) are Cytoplasmic-facing. Serine 947 is subject to Phosphoserine; by PKA. Residues 956 to 974 (KILIFGLFEETALAAFLSY) traverse the membrane as a helical segment. Over 975-989 (CPGMDVALRMYPLKP) the chain is Extracellular. A helical membrane pass occupies residues 990 to 1010 (NWWFCAFPYSLLIFIYDEIRK). Residues 1011-1027 (LILRRNPGGWMERETYY) lie on the Cytoplasmic side of the membrane.

This sequence belongs to the cation transport ATPase (P-type) (TC 3.A.3) family. Type IIC subfamily. In terms of assembly, the sodium/potassium-transporting ATPase is composed of a catalytic alpha subunit, an auxiliary non-catalytic beta subunit and an additional regulatory subunit.

It localises to the cell membrane. The protein localises to the sarcolemma. It catalyses the reaction K(+)(out) + Na(+)(in) + ATP + H2O = K(+)(in) + Na(+)(out) + ADP + phosphate + H(+). Functionally, this is the catalytic component of the active enzyme, which catalyzes the hydrolysis of ATP coupled with the exchange of sodium and potassium ions across the plasma membrane. This action creates the electrochemical gradient of sodium and potassium ions, providing the energy for active transport of various nutrients. This chain is Sodium/potassium-transporting ATPase subunit alpha-1 (atp1a1), found in Catostomus commersonii (White sucker).